A 195-amino-acid polypeptide reads, in one-letter code: Large ribosomal subunit protein bL25 (195 aa).

It belongs to the bacterial ribosomal protein bL25 family. CTC subfamily. As to quaternary structure, part of the 50S ribosomal subunit; part of the 5S rRNA/L5/L18/L25 subcomplex. Contacts the 5S rRNA. Binds to the 5S rRNA independently of L5 and L18.

Functionally, this is one of the proteins that binds to the 5S RNA in the ribosome where it forms part of the central protuberance. This Geobacter metallireducens (strain ATCC 53774 / DSM 7210 / GS-15) protein is Large ribosomal subunit protein bL25.